The chain runs to 214 residues: Dephospho-CoA kinase (214 aa).

The DPCK domain occupies Lys-3 to Ala-202. Residue Gly-11–Arg-16 coordinates ATP.

The protein belongs to the CoaE family.

It is found in the cytoplasm. It catalyses the reaction 3'-dephospho-CoA + ATP = ADP + CoA + H(+). It participates in cofactor biosynthesis; coenzyme A biosynthesis; CoA from (R)-pantothenate: step 5/5. Catalyzes the phosphorylation of the 3'-hydroxyl group of dephosphocoenzyme A to form coenzyme A. This is Dephospho-CoA kinase from Bordetella pertussis (strain Tohama I / ATCC BAA-589 / NCTC 13251).